The following is a 758-amino-acid chain: Transmembrane E3 ubiquitin-protein ligase 1 (758 aa).

The N-terminal stretch at 1–26 (MEIDGNTLVFIIVILFLFFSSPGGDG) is a signal peptide. Topologically, residues 27 to 398 (VSSQYEFNQL…YELKIMSIRK (372 aa)) are lumenal. Residues 399–419 (HLLFGIALFAAQIYLLLTQMH) form a helical membrane-spanning segment. Residues 420–431 (HTNTPSMVNKIS) lie on the Cytoplasmic side of the membrane. Residues 432–452 (FYCFSMINLVDGSLATLYFVA) form a helical membrane-spanning segment. The Lumenal portion of the chain corresponds to 453–458 (ASVVPE). Residues 459 to 479 (LYLPLVISAFSCFILASIFEI) traverse the membrane as a helical segment. At 480–523 (RYLISIYASQVNEQNVGIINLLRGNTGTYDENRPRPAFIPDEGS) the chain is on the cytoplasmic side. Residues 524 to 544 (IGGSLYGRFFFMLIIFTFLIL) form a helical membrane-spanning segment. Residues 545 to 553 (SSTSWPRQL) are Lumenal-facing. A helical membrane pass occupies residues 554-574 (RMVFEYILIFILNSYWIPQIF). At 575–602 (RNAVKGIPSRRERARSSIGGNRSQNKMP) the chain is on the cytoplasmic side. A helical transmembrane segment spans residues 603–623 (LLWSFVIGTTIIRSLPVVYVF). Topologically, residues 624–635 (TYSSNVFRHHKD) are lumenal. A helical transmembrane segment spans residues 636–656 (VHFVVFLSLWLLFQISILYSQ). Topologically, residues 657–758 (DVLGSRWFLP…PVCRSPLPPL (102 aa)) are cytoplasmic. The RING-type; atypical zinc-finger motif lies at 699 to 752 (CAICMSDVPIYIEEIPETHKVDQHSYMVTPCNHVFHTSCLENWMNYKLQCPVCR).

In terms of assembly, component of the DSC E3 ligase complexes composed of at least TUL1, DSC2, DSC3, UBX3, CDC48 as well as VLD1 for the vacuole-localized complex or GLD1 for the Golgi/endosome-localized complex. Interacts with UBC4.

The protein resides in the golgi apparatus membrane. The enzyme catalyses S-ubiquitinyl-[E2 ubiquitin-conjugating enzyme]-L-cysteine + [acceptor protein]-L-lysine = [E2 ubiquitin-conjugating enzyme]-L-cysteine + N(6)-ubiquitinyl-[acceptor protein]-L-lysine.. It participates in protein modification; protein ubiquitination. Catalytic component of the DSC E3 ubiquitin ligase complexes that tag proteins present in Golgi, endosome and vacuole membranes and function in protein homeostasis under non-stress conditions and support a role in protein quality control. Mediates ubiquitination of vacuolar proteins such as CPS1, PPN1, PEP12 and other proteins containing exposed hydrophilic residues within their transmembrane domains, leading to their sorting into internal vesicles in late endosomes. Targets also the unpalmitoylated endosomal SNARE TLG1 to the MVB pathway. This Saccharomyces cerevisiae (strain ATCC 204508 / S288c) (Baker's yeast) protein is Transmembrane E3 ubiquitin-protein ligase 1 (TUL1).